Reading from the N-terminus, the 246-residue chain is MSALLILALVGAAVAFPLEDDDKIVGGYTCPEHSVPYQVSLNSGYHFCGGSLINDQWVVSAAHCYKSRIQVRLGEHNINVLEGDEQFINAAKIIKHPNYSSWTLNNDIMLIKLSSPVKLNARVAPVALPSACAPAGTQCLISGWGNTLSNGVNNPDLLQCVDAPVLSQADCEAAYPGEITSSMICVGFLEGGKDSCQGDSGGPVVCNGQLQGIVSWGYGCALPDNPGVYTKVCNFVGWIQDTIAAN.

An N-terminal signal peptide occupies residues 1–15 (MSALLILALVGAAVA). Positions 16-23 (FPLEDDDK) are cleaved as a propeptide — activation peptide. Residues 24 to 244 (IVGGYTCPEH…FVGWIQDTIA (221 aa)) form the Peptidase S1 domain. Disulfide bonds link Cys30–Cys160, Cys48–Cys64, Cys132–Cys233, Cys139–Cys206, Cys171–Cys185, and Cys196–Cys220. The active-site Charge relay system is the His63. Ca(2+) is bound by residues Glu75, Asn77, Val80, and Glu85. The Charge relay system role is filled by Asp107. Ser200 (charge relay system) is an active-site residue.

The protein belongs to the peptidase S1 family. Interacts with SERPINA1. The cofactor is Ca(2+).

Its subcellular location is the secreted. The protein resides in the extracellular space. It catalyses the reaction Preferential cleavage: Arg-|-Xaa, Lys-|-Xaa.. The protein is Serine protease 1 of Rattus norvegicus (Rat).